The chain runs to 255 residues: Large ribosomal subunit protein uL2 (255 aa).

The disordered stretch occupies residues 211–235 (PHGGGNHQHVGHATTTKRDDPAGKK).

It belongs to the universal ribosomal protein uL2 family.

This Dictyostelium discoideum (Social amoeba) protein is Large ribosomal subunit protein uL2 (rpl8).